The primary structure comprises 179 residues: Large ribosomal subunit protein uL5 (179 aa).

It belongs to the universal ribosomal protein uL5 family. Part of the 50S ribosomal subunit; part of the 5S rRNA/L5/L18/L25 subcomplex. Contacts the 5S rRNA and the P site tRNA. Forms a bridge to the 30S subunit in the 70S ribosome.

Functionally, this is one of the proteins that bind and probably mediate the attachment of the 5S RNA into the large ribosomal subunit, where it forms part of the central protuberance. In the 70S ribosome it contacts protein S13 of the 30S subunit (bridge B1b), connecting the 2 subunits; this bridge is implicated in subunit movement. Contacts the P site tRNA; the 5S rRNA and some of its associated proteins might help stabilize positioning of ribosome-bound tRNAs. The sequence is that of Large ribosomal subunit protein uL5 from Exiguobacterium sp. (strain ATCC BAA-1283 / AT1b).